A 157-amino-acid polypeptide reads, in one-letter code: Nascent polypeptide-associated complex subunit beta (157 aa).

The interval 1–31 is disordered; that stretch reads MPVDPEKLAKLQKSTAKKVGGSRVKAKKGVK. An NAC-A/B domain is found at 33-98; it reads EQDDTKLIET…PQEKNITQLI (66 aa). The interval 125-157 is disordered; the sequence is NPKDFGAAGEAGATEEANEDIPDLVDQKFDDVE. Low complexity predominate over residues 130–139; the sequence is GAAGEAGATE.

Belongs to the NAC-beta family. As to quaternary structure, part of the nascent polypeptide-associated complex (NAC), consisting of EGD2 and EGD1. NAC associates with ribosomes via EGD1.

The protein resides in the cytoplasm. The protein localises to the nucleus. Component of the nascent polypeptide-associated complex (NAC), a dynamic component of the ribosomal exit tunnel, protecting the emerging polypeptides from interaction with other cytoplasmic proteins to ensure appropriate nascent protein targeting. The NAC complex also promotes mitochondrial protein import by enhancing productive ribosome interactions with the outer mitochondrial membrane and blocks the inappropriate interaction of ribosomes translating non-secretory nascent polypeptides with translocation sites in the membrane of the endoplasmic reticulum. EGD1 may act as a transcription factor that exert a negative effect on the expression of several genes that are transcribed by RNA polymerase II. This is Nascent polypeptide-associated complex subunit beta (EGD1) from Lodderomyces elongisporus (strain ATCC 11503 / CBS 2605 / JCM 1781 / NBRC 1676 / NRRL YB-4239) (Yeast).